Here is a 135-residue protein sequence, read N- to C-terminus: Small ribosomal subunit protein bS16 (135 aa).

Belongs to the bacterial ribosomal protein bS16 family.

The sequence is that of Small ribosomal subunit protein bS16 from Prosthecochloris aestuarii (strain DSM 271 / SK 413).